A 549-amino-acid chain; its full sequence is MSRVIRAPRGTTLHCKNWQIEAPYRTLMNNLDPEVAEDPANLIVYGGAGKAARNWEAFDKIIESLENLEEDETLLIQSGKPVGIFKTHTMAPRVLISNAMLVPAWANWENFWDLEAKGLTMYGQMTAGSWIYIGTQGIIEGTFETFAALAKKHFDGTLKGKFVLTAGLGGMSGAQPLAVTMLDGACLVVEVDRNRIQRRLDTKYLDVMTDNLDEALEMVLKAKEEGKPLSVGLVGNAADVHPELVRRGIIPDVVTDQTSAHDPLNGYVPNGMTLEEAFALRKSNPEEYIKRAKKAMAEHVSAMLEMQKRGAIAFDYGNNIRRMAYDEGVKEAFNIQGYVPEYIRDLFSEGKGPFRWIALSGDPEDIYKTDEKVLELFPEDKLLERWIRLAREKIKFQGLPARICWLGYGQRAEFGLAINEMVRKGELKAPIVIGRDHHDTGSVASPYRETEAMKDGSDAIADWPILNALLNTASGATWVSVHHGGGVGIGYSIHAGVVVCADGTKESDLRIERVLTSDPGSGVMRHADAGYEIAIRTAKEKGIKMPMLK.

NAD(+)-binding positions include 46–47, Q124, E190, R195, 236–237, 257–261, 267–268, and Y316; these read GG, NA, QTSAH, and YV. The active site involves C404. G486 contacts NAD(+).

It belongs to the urocanase family. NAD(+) serves as cofactor.

Its subcellular location is the cytoplasm. It carries out the reaction 4-imidazolone-5-propanoate = trans-urocanate + H2O. Its pathway is amino-acid degradation; L-histidine degradation into L-glutamate; N-formimidoyl-L-glutamate from L-histidine: step 2/3. Catalyzes the conversion of urocanate to 4-imidazolone-5-propionate. In Thermoanaerobacter pseudethanolicus (strain ATCC 33223 / 39E) (Clostridium thermohydrosulfuricum), this protein is Urocanate hydratase.